Consider the following 113-residue polypeptide: Cell cycle protein GpsB (113 aa).

The stretch at 37–63 (KDYETYATLVKSLRQEIADLKEELTRK) forms a coiled coil. Residues 61–82 (TRKPQVSSAPSPSHPDPIDVAA) form a disordered region.

The protein belongs to the GpsB family. As to quaternary structure, forms polymers through the coiled coil domains. Interacts with PBP1, MreC and EzrA.

The protein resides in the cytoplasm. Its function is as follows. Divisome component that associates with the complex late in its assembly, after the Z-ring is formed, and is dependent on DivIC and PBP2B for its recruitment to the divisome. Together with EzrA, is a key component of the system that regulates PBP1 localization during cell cycle progression. Its main role could be the removal of PBP1 from the cell pole after pole maturation is completed. Also contributes to the recruitment of PBP1 to the division complex. Not essential for septum formation. The polypeptide is Cell cycle protein GpsB (Streptococcus pneumoniae (strain ATCC 700669 / Spain 23F-1)).